The chain runs to 212 residues: Ribosomal RNA small subunit methyltransferase G (212 aa).

S-adenosyl-L-methionine is bound by residues glycine 80, leucine 85, 131–132 (AE), and arginine 146.

This sequence belongs to the methyltransferase superfamily. RNA methyltransferase RsmG family.

It is found in the cytoplasm. The catalysed reaction is guanosine(527) in 16S rRNA + S-adenosyl-L-methionine = N(7)-methylguanosine(527) in 16S rRNA + S-adenosyl-L-homocysteine. Functionally, specifically methylates the N7 position of guanine in position 527 of 16S rRNA. This chain is Ribosomal RNA small subunit methyltransferase G, found in Xylella fastidiosa (strain M23).